The sequence spans 563 residues: Germacrene C/D synthase (563 aa).

Residues Met-1 to Arg-22 are disordered. Mg(2+) is bound by residues Asp-315, Asp-319, and Glu-468. The DDXXD motif signature appears at Asp-315–Asp-319.

Belongs to the terpene synthase family. It depends on Mg(2+) as a cofactor. Predominantly expressed in root.

It catalyses the reaction (2E,6E)-farnesyl diphosphate = germacrene C + diphosphate. The enzyme catalyses (2E,6E)-farnesyl diphosphate = (-)-germacrene D + diphosphate. Its function is as follows. Mediates formation of germacrene C and germacrene D using farnesyl diphosphate as substrate. Can also catalyze formation of trace of germacrene B. This is Germacrene C/D synthase (TPS1) from Valeriana officinalis (Valerian).